A 99-amino-acid chain; its full sequence is NADH-quinone oxidoreductase subunit K 1 (99 aa).

3 helical membrane-spanning segments follow: residues 3-23, 28-48, and 59-79; these read PVNYLYLAALLFAIGASGVLV, IVVFMCVELMLNACNLALVTF, and IVAFFTMVVAAAEVVVGLAII.

Belongs to the complex I subunit 4L family. In terms of assembly, NDH-1 is composed of 14 different subunits. Subunits NuoA, H, J, K, L, M, N constitute the membrane sector of the complex.

It localises to the cell membrane. It carries out the reaction a quinone + NADH + 5 H(+)(in) = a quinol + NAD(+) + 4 H(+)(out). Its function is as follows. NDH-1 shuttles electrons from NADH, via FMN and iron-sulfur (Fe-S) centers, to quinones in the respiratory chain. The immediate electron acceptor for the enzyme in this species is believed to be a menaquinone. Couples the redox reaction to proton translocation (for every two electrons transferred, four hydrogen ions are translocated across the cytoplasmic membrane), and thus conserves the redox energy in a proton gradient. This is NADH-quinone oxidoreductase subunit K 1 from Streptomyces griseus subsp. griseus (strain JCM 4626 / CBS 651.72 / NBRC 13350 / KCC S-0626 / ISP 5235).